The following is a 1136-amino-acid chain: Probable phospholipid-transporting ATPase IIB (1136 aa).

Topologically, residues 1–145 are cytoplasmic; it reads MADQIPLYPV…IKNQKYNIFT (145 aa). A helical transmembrane segment spans residues 146–166; the sequence is FIPGVLYEQFKFFLNLYFLIV. Residues 167-174 lie on the Extracellular side of the membrane; the sequence is SCSQFVPA. Residues 175-195 traverse the membrane as a helical segment; the sequence is LKIGYLYTYWAPLGFVLAVTI. The Cytoplasmic portion of the chain corresponds to 196-383; that stretch reads MREAVDEFRR…LDLELNQLTK (188 aa). Residues 384 to 404 form a helical membrane-spanning segment; sequence ALFLALVALSVVMVTLQGFAG. Topologically, residues 405-408 are extracellular; it reads PWYR. The helical transmembrane segment at 409–429 threads the bilayer; sequence SLFRFLLLFSYIIPISLRVNL. The Cytoplasmic portion of the chain corresponds to 430-939; the sequence is DMGKAAYGWM…ALGQFVMHRG (510 aa). Asp469 (4-aspartylphosphate intermediate) is an active-site residue. ATP contacts are provided by Asp469, Lys470, and Thr471. Asp469 is a binding site for Mg(2+). Position 471 (Thr471) interacts with Mg(2+). The disordered stretch occupies residues 514–538; that stretch reads AGGSSAASTPPRKAPSSAPKVRRSV. Residues Glu591, Phe633, Lys638, Lys657, Arg686, Thr687, Thr766, Gly767, Asp768, Arg848, and Lys854 each contribute to the ATP site. Asp874 provides a ligand contact to Mg(2+). Residues Asn877 and Asp878 each coordinate ATP. Asp878 is a Mg(2+) binding site. Residues 940–960 traverse the membrane as a helical segment; that stretch reads LIISTMQAVFSSVFYFASVPL. Residues 961 to 962 lie on the Extracellular side of the membrane; it reads YQ. A helical membrane pass occupies residues 963–983; that stretch reads GFLMVGYATVYTMFPVFSLVL. Residues 984–1012 lie on the Cytoplasmic side of the membrane; the sequence is DQDVKPEMAMLYPELYKDLTKGRSLSFKT. The chain crosses the membrane as a helical span at residues 1013-1033; the sequence is FLVWVLISIYQGGILMFGALV. Topologically, residues 1034 to 1041 are extracellular; it reads LFESEFVH. The helical transmembrane segment at 1042–1062 threads the bilayer; the sequence is VVAISFTALVLTELLMVALTV. Topologically, residues 1063–1066 are cytoplasmic; the sequence is RTWH. A helical transmembrane segment spans residues 1067-1087; it reads WLMVVAQLLSLGCYVASLAFL. Over 1088 to 1098 the chain is Extracellular; the sequence is NEYFDVAFITT. Residues 1099 to 1119 form a helical membrane-spanning segment; that stretch reads VTFVWKVSAITVVSCLPLYVL. The Cytoplasmic segment spans residues 1120–1136; sequence KYLKRKLSPPSYSKLSS.

Belongs to the cation transport ATPase (P-type) (TC 3.A.3) family. Type IV subfamily. Mg(2+) serves as cofactor.

It localises to the golgi apparatus. The protein resides in the trans-Golgi network membrane. It catalyses the reaction ATP + H2O + phospholipidSide 1 = ADP + phosphate + phospholipidSide 2.. The chain is Probable phospholipid-transporting ATPase IIB (ATP9B) from Bos taurus (Bovine).